A 199-amino-acid polypeptide reads, in one-letter code: Probable chemoreceptor glutamine deamidase CheD (199 aa).

It belongs to the CheD family.

The enzyme catalyses L-glutaminyl-[protein] + H2O = L-glutamyl-[protein] + NH4(+). In terms of biological role, probably deamidates glutamine residues to glutamate on methyl-accepting chemotaxis receptors (MCPs), playing an important role in chemotaxis. The protein is Probable chemoreceptor glutamine deamidase CheD of Nitratidesulfovibrio vulgaris (strain ATCC 29579 / DSM 644 / CCUG 34227 / NCIMB 8303 / VKM B-1760 / Hildenborough) (Desulfovibrio vulgaris).